Reading from the N-terminus, the 332-residue chain is Homeobox protein DLX-2 (332 aa).

Over residues 19–28 (ASSTYHQHQQ) the composition is skewed to polar residues. Residues 19-83 (ASSTYHQHQQ…QHPAGGGGGG (65 aa)) are disordered. Positions 40–49 (NSNSSSSNSS) are enriched in low complexity. The span at 55–75 (ESPTLPVSTATDSSYYTNQQH) shows a compositional bias: polar residues. Residues 155 to 214 (VRKPRTIYSSFQLAALQRRFQKTQYLALPERAELAASLGLTQTQVKIWFQNRRSKFKKMW) constitute a DNA-binding region (homeobox). Disordered regions lie at residues 219 to 272 (IPTE…SSPS) and 304 to 332 (PSQT…GTIF). Residue Ser235 is modified to Phosphoserine. The span at 253–266 (AGGGPGSGGGGAGS) shows a compositional bias: gly residues. Residues 310–320 (AHHHHHHHHHA) show a composition bias toward basic residues.

This sequence belongs to the distal-less homeobox family. Interacts (via homeobox DNA-binding domain) with POU4F2; this interaction enhances retinal ganglion cell (RGC) differentiation. Phosphorylated by serine/threonine kinases. In terms of tissue distribution, expressed only in neural and other ectodermal structures of the head: the brain, the vomeronasal organ, and the preameloblasts of the teeth. Primarily expressed in the germinal cells of the ventral forebrain in the midgestational embryo, and in both dorsal and ventral ventricular zones in late embryogenesis and early postnatal life. Expressed in the inner nuclear layer of the retina.

The protein localises to the nucleus. In terms of biological role, acts as a transcriptional activator. Activates transcription of CGA/alpha-GSU, via binding to the downstream activin regulatory element (DARE) in the gene promoter. Plays a role in terminal differentiation of interneurons, such as amacrine and bipolar cells in the developing retina. Likely to play a regulatory role in the development of the ventral forebrain. May play a role in craniofacial patterning and morphogenesis. The sequence is that of Homeobox protein DLX-2 (Dlx2) from Mus musculus (Mouse).